A 125-amino-acid polypeptide reads, in one-letter code: Large ribosomal subunit protein eL31 (125 aa).

Belongs to the eukaryotic ribosomal protein eL31 family. In terms of assembly, component of the large ribosomal subunit.

The protein localises to the cytoplasm. In terms of biological role, component of the large ribosomal subunit. The ribosome is a large ribonucleoprotein complex responsible for the synthesis of proteins in the cell. The sequence is that of Large ribosomal subunit protein eL31 (rpl31) from Xenopus laevis (African clawed frog).